Consider the following 103-residue polypeptide: NAD(P)H-quinone oxidoreductase subunit 4L (103 aa).

The next 3 membrane-spanning stretches (helical) occupy residues 5–25 (LQYCLILAAALFCIGIYGLIT), 32–52 (VLMSIELLLNAVNLNLMGFSN), and 66–86 (IFVITIAAAEAAVGLAIVLAI).

It belongs to the complex I subunit 4L family. In terms of assembly, NDH-1 can be composed of about 15 different subunits; different subcomplexes with different compositions have been identified which probably have different functions.

Its subcellular location is the cellular thylakoid membrane. It catalyses the reaction a plastoquinone + NADH + (n+1) H(+)(in) = a plastoquinol + NAD(+) + n H(+)(out). The enzyme catalyses a plastoquinone + NADPH + (n+1) H(+)(in) = a plastoquinol + NADP(+) + n H(+)(out). Functionally, NDH-1 shuttles electrons from an unknown electron donor, via FMN and iron-sulfur (Fe-S) centers, to quinones in the respiratory and/or the photosynthetic chain. The immediate electron acceptor for the enzyme in this species is believed to be plastoquinone. Couples the redox reaction to proton translocation, and thus conserves the redox energy in a proton gradient. Cyanobacterial NDH-1 also plays a role in inorganic carbon-concentration. This Synechocystis sp. (strain ATCC 27184 / PCC 6803 / Kazusa) protein is NAD(P)H-quinone oxidoreductase subunit 4L.